A 297-amino-acid chain; its full sequence is SWIRM domain-containing protein laf1 (297 aa).

2 disordered regions span residues 50–70 (PKCSTIPESPKDSIVEPKPTA) and 109–173 (STPA…EFSS). Over residues 159–173 (QHNTRFKQSSREFSS) the composition is skewed to polar residues. An SWIRM domain is found at 207 to 297 (LRSEWKGPPL…AFHDEGFFDD (91 aa)).

As to quaternary structure, component of the RPD3C(L) complex.

The protein localises to the nucleus. In terms of biological role, component of the RPD3C(L) histone deacetylase complex (HDAC) responsible for the deacetylation of lysine residues on the N-terminal part of the core histones (H2A, H2B, H3 and H4). Histone deacetylation gives a tag for epigenetic repression and plays an important role in transcriptional regulation, cell cycle progression and developmental events. This Schizosaccharomyces pombe (strain 972 / ATCC 24843) (Fission yeast) protein is SWIRM domain-containing protein laf1 (laf1).